The chain runs to 224 residues: Orotate phosphoribosyltransferase (224 aa).

5-phospho-alpha-D-ribose 1-diphosphate is bound by residues Lys26, 73–74 (YK), Arg100, Lys101, Lys104, His106, and 127–135 (EDVTTAGTS). Residues Thr131 and Arg160 each contribute to the orotate site.

This sequence belongs to the purine/pyrimidine phosphoribosyltransferase family. PyrE subfamily. Homodimer. Mg(2+) is required as a cofactor.

The enzyme catalyses orotidine 5'-phosphate + diphosphate = orotate + 5-phospho-alpha-D-ribose 1-diphosphate. Its pathway is pyrimidine metabolism; UMP biosynthesis via de novo pathway; UMP from orotate: step 1/2. Its function is as follows. Catalyzes the transfer of a ribosyl phosphate group from 5-phosphoribose 1-diphosphate to orotate, leading to the formation of orotidine monophosphate (OMP). This is Orotate phosphoribosyltransferase from Clostridium beijerinckii (strain ATCC 51743 / NCIMB 8052) (Clostridium acetobutylicum).